A 719-amino-acid chain; its full sequence is Fusicoccadiene synthase (719 aa).

The segment at 1-334 is fusicocca-2,10(14)-diene synthase; it reads MEFKYSEVVE…RYNPDVSFNK (334 aa). Mg(2+)-binding residues include aspartate 92 and aspartate 96. Residues 335–719 are geranylgeranyl diphosphate synthase; that stretch reads TQLEWMRQGL…MRLLLELLRV (385 aa). Positions 358-404 are disordered; it reads EIDSDESAVSPTADESDSTEDSLGSGSRQDSSLSTGLSLSPVHSNEG. The segment covering 378–400 has biased composition (polar residues); sequence DSLGSGSRQDSSLSTGLSLSPVH. Isopentenyl diphosphate is bound by residues lysine 435, arginine 438, and histidine 467. Positions 474 and 478 each coordinate Mg(2+). Position 483 (arginine 483) interacts with dimethylallyl diphosphate. Residue arginine 484 participates in isopentenyl diphosphate binding. Residues lysine 561, threonine 562, glutamine 602, asparagine 609, lysine 619, and lysine 629 each contribute to the dimethylallyl diphosphate site.

In the N-terminal section; belongs to the terpene synthase family. This sequence in the C-terminal section; belongs to the FPP/GGPP synthase family. In terms of assembly, hexamer.

The catalysed reaction is geranylgeranyl diphosphate = fusicocca-2,10(14)-diene + diphosphate. It carries out the reaction isopentenyl diphosphate + (2E,6E)-farnesyl diphosphate = (2E,6E,10E)-geranylgeranyl diphosphate + diphosphate. It functions in the pathway mycotoxin biosynthesis. Functionally, multifunctional diterpene synthase; part of the 2 gene clusters that mediate the biosynthesis of fusicoccins, diterpene glucosides that display phytohormone-like activity and function as potent activators of plasma membrane H(+)-ATPases in plants by modifying 14-3-3 proteins and cause the plant disease constriction canker. The first step in the pathway is performed by the fusicoccadiene synthase PaFS that possesses both prenyl transferase and terpene cyclase activity, converting isopentenyl diphosphate and dimethylallyl diphosphate into geranylgeranyl diphosphate (GGDP) and successively converting GGDP into fusicocca-2,10(14)-diene, a precursor for fusicoccin H. Fusicoccadiene synthase is an allosteric enzyme for GGPP cyclization that generates 64% fusicoccadiene, 9% delta-araneosene, and one additional unidentified diterpene product, when incubated with GGPP. In the absence of isopentenyl diphosphate (IPP), PaFS can also solvolyze the shorter chain geranyl diphosphate (GPP) and farnesyl diphosphate (FPP) as alternative substrates to yield predominantly acyclic products. FPP is converted to farnesol (60.5%), nerolidol (14.0%), and farnesene (14.0%), while GPP is converted to a mixture of geraniol (59.5%) and linalool (35.0%). The second step is the oxidation at the C-8 position by the cytochrome P450 monooxygenase PaP450-2 to yield fusicocca-2,10(14)-diene-8-beta-ol. The cytochrome P450 monooxygenase PaP450-1 then catalyzes the hydroxylation at the C-16 position to produce fusicocca-2,10(14)-diene-8-beta,16-diol. The dioxygenase fc-dox then catalyzes the 16-oxydation of fusicocca-2,10(14)-diene-8-beta,16-diol to yield an aldehyde (8-beta-hydroxyfusicocca-1,10(14)-dien-16-al). The short-chain dehydrogenase/reductase fc-sdr catalyzes the reduction of the aldehyde to yield fusicocca-1,10(14)-diene-8-beta,16-diol. The next step is the hydroxylation at C-9 performed by the cytochrome P450 monooxygenase PaP450-3 that leads to fusicoccin H aglycon which is glycosylated to fusicoccin H by the O-glycosyltransferase PAGT. Hydroxylation at C-12 by the cytochrome P450 monooxygenase PaP450-4 leads then to the production of fusicoccin Q and is followed by methylation by the O-methyltransferase PAMT to yield fusicoccin P. Fusicoccin P is further converted to fusicoccin J via prenylation by the O-glucose prenyltransferase PaPT. Cytochrome P450 monooxygenase PaP450-5 then performs hydroxylation at C-19 to yield dideacetyl-fusicoccin A which is acetylated to 3'-O-deacetyl-fusicoccin A by the O-acetyltransferase PaAT-2. Finally, a another acetylation by the O-acetyltransferase PaAT-1 yields fusicoccin A. The polypeptide is Fusicoccadiene synthase (Phomopsis amygdali (Fusicoccum amygdali)).